The following is a 468-amino-acid chain: Nuclear receptor ROR-alpha A (468 aa).

The segment at residues 15–90 (IIPCKICGDK…VGMSRDAVKF (76 aa)) is a DNA-binding region (nuclear receptor). 2 NR C4-type zinc fingers span residues 18–38 (CKICGDKSSGIHYGVITCEGC) and 54–73 (CPRQKNCLIDRTSRNRCQHC). Disordered stretches follow at residues 101–129 (LYAEVQKHRLQQQQRDHQQQPGEAEPLTP) and 142–163 (HDDLSGYMNGHTPDGTKPDSGV). An NR LBD domain is found at 217 to 455 (ELEHLAQNIS…AHFPPLYKEL (239 aa)). An AF-2 region spans residues 444 to 455 (VRAHFPPLYKEL).

Belongs to the nuclear hormone receptor family. NR1 subfamily. As to expression, expressed in the brain, in cerebellar-like structures, including Purkinje cells.

The protein localises to the nucleus. Functionally, nuclear receptor that binds DNA as a monomer to ROR response elements (RORE). Required for proper cerebellum development. The chain is Nuclear receptor ROR-alpha A (roraa) from Danio rerio (Zebrafish).